A 137-amino-acid polypeptide reads, in one-letter code: Thionin BTH7 (137 aa).

Positions 1 to 28 (MATNKSIKSVVICVLILGLVLEQVQVEG) are cleaved as a signal peptide. Disulfide bonds link cysteine 31/cysteine 68, cysteine 32/cysteine 60, cysteine 40/cysteine 58, and cysteine 44/cysteine 54. Residues 75-137 (LNLLPESGEP…DGEVIQSVEA (63 aa)) constitute a propeptide, acidic domain.

It belongs to the plant thionin (TC 1.C.44) family. 4 C-C subfamily.

Its subcellular location is the secreted. Thionins are small plant proteins which are toxic to animal cells. They seem to exert their toxic effect at the level of the cell membrane. Their precise function is not known. This chain is Thionin BTH7, found in Hordeum vulgare (Barley).